The primary structure comprises 289 residues: tRNA pseudouridine synthase B (289 aa).

Residue D38 is the Nucleophile of the active site.

It belongs to the pseudouridine synthase TruB family. Type 1 subfamily.

The catalysed reaction is uridine(55) in tRNA = pseudouridine(55) in tRNA. Responsible for synthesis of pseudouridine from uracil-55 in the psi GC loop of transfer RNAs. The chain is tRNA pseudouridine synthase B from Clostridium novyi (strain NT).